We begin with the raw amino-acid sequence, 447 residues long: Asparagine--tRNA ligase (447 aa).

The protein belongs to the class-II aminoacyl-tRNA synthetase family. In terms of assembly, homodimer.

The protein localises to the cytoplasm. The enzyme catalyses tRNA(Asn) + L-asparagine + ATP = L-asparaginyl-tRNA(Asn) + AMP + diphosphate + H(+). In Mycoplasma mobile (strain ATCC 43663 / 163K / NCTC 11711) (Mesomycoplasma mobile), this protein is Asparagine--tRNA ligase.